The primary structure comprises 807 residues: Tyrosine-protein kinase receptor torso (807 aa).

An N-terminal signal peptide occupies residues 1–28 (MYSEGKLLKVFLIFAGFIIFSLCGEVVS). At 29-370 (QRYPPAPGLL…RAFTPGMLRW (342 aa)) the chain is on the extracellular side. 4 disulfides stabilise this stretch: cysteine 46-cysteine 61, cysteine 81-cysteine 203, cysteine 210-cysteine 239, and cysteine 259-cysteine 265. Residues asparagine 54, asparagine 171, asparagine 183, and asparagine 195 are each glycosylated (N-linked (GlcNAc...) asparagine). 3 N-linked (GlcNAc...) asparagine glycosylation sites follow: asparagine 307, asparagine 323, and asparagine 344. The helical transmembrane segment at 371–391 (VWAGATAGAGCAAGGLLAATL) threads the bilayer. Residues 392 to 807 (LCCGHRRATS…SPPVIQTKTA (416 aa)) lie on the Cytoplasmic side of the membrane. A Protein kinase domain is found at 439 to 738 (VLLHEVIGEG…PTFPELHQKL (300 aa)). ATP is bound by residues 445–453 (IGEGAFGVV) and lysine 468. The active-site Proton acceptor is the aspartate 607.

This sequence belongs to the protein kinase superfamily. Tyr protein kinase family. Homodimer; disulfide-linked. Mg(2+) is required as a cofactor. In terms of processing, may be auto-phosphorylated on tyrosine residues. At least one of the 3 cysteine residues Cys-381, Cys-393 or Cys-394 is involved in the formation of interchain disulfide bonds. The disulfide bond sites in the extracellular region are not involved in homodimer formation.

Its subcellular location is the cell membrane. It carries out the reaction L-tyrosyl-[protein] + ATP = O-phospho-L-tyrosyl-[protein] + ADP + H(+). Probable receptor tyrosine kinase. During postembryonic development, involved in the initiation of metamorphosis probably by inducing the production of ecdysone in response to prothoracicotropic hormone (PTTH). Binding to PTTH stimulates activation of canonical MAPK signaling leading to ERK phosphorylation. In Bombyx mori (Silk moth), this protein is Tyrosine-protein kinase receptor torso.